Consider the following 429-residue polypeptide: Protein S-Myc (429 aa).

Tyr36 carries the phosphotyrosine; by Tyr-kinases modification. The segment at 301–325 (PLPYAEDARPLKKPRSQDPLGPLKC) is disordered. The bHLH domain maps to 346–398 (ERRRNHNRMERQRRDIMRSSFLNLRDLVPELVHNEKAAKVVILKKATEYIHTL). The leucine-zipper stretch occupies residues 398 to 419 (LQTDESKLLVEREKLYERKQQL).

Efficient DNA binding requires dimerization with another bHLH protein.

It is found in the nucleus. Its function is as follows. Has apoptosis-inducing activity. The protein is Protein S-Myc (Mycs) of Rattus norvegicus (Rat).